The following is a 273-amino-acid chain: Citrate lyase subunit beta-like protein (273 aa).

Residues R64 and E112 each contribute to the substrate site. 2 residues coordinate Mg(2+): E112 and D138.

It belongs to the HpcH/HpaI aldolase family. Citrate lyase beta subunit-like subfamily. In terms of assembly, homotrimer. Requires Mg(2+) as cofactor.

In terms of biological role, may play a role in fatty acid biosynthesis. The chain is Citrate lyase subunit beta-like protein (citE) from Mycobacterium tuberculosis (strain CDC 1551 / Oshkosh).